The sequence spans 239 residues: Ribosomal RNA small subunit methyltransferase A (239 aa).

Residues N23, I25, G50, E72, D97, and N116 each coordinate S-adenosyl-L-methionine.

This sequence belongs to the class I-like SAM-binding methyltransferase superfamily. rRNA adenine N(6)-methyltransferase family. RsmA subfamily.

It is found in the cytoplasm. The enzyme catalyses adenosine(1518)/adenosine(1519) in 16S rRNA + 4 S-adenosyl-L-methionine = N(6)-dimethyladenosine(1518)/N(6)-dimethyladenosine(1519) in 16S rRNA + 4 S-adenosyl-L-homocysteine + 4 H(+). Its function is as follows. Specifically dimethylates two adjacent adenosines (A1518 and A1519) in the loop of a conserved hairpin near the 3'-end of 16S rRNA in the 30S particle. May play a critical role in biogenesis of 30S subunits. This Rickettsia felis (strain ATCC VR-1525 / URRWXCal2) (Rickettsia azadi) protein is Ribosomal RNA small subunit methyltransferase A.